Consider the following 458-residue polypeptide: ATP synthase subunit beta (458 aa).

Residue 148-155 participates in ATP binding; sequence GGAGVGKT.

Belongs to the ATPase alpha/beta chains family. F-type ATPases have 2 components, CF(1) - the catalytic core - and CF(0) - the membrane proton channel. CF(1) has five subunits: alpha(3), beta(3), gamma(1), delta(1), epsilon(1). CF(0) has three main subunits: a(1), b(2) and c(9-12). The alpha and beta chains form an alternating ring which encloses part of the gamma chain. CF(1) is attached to CF(0) by a central stalk formed by the gamma and epsilon chains, while a peripheral stalk is formed by the delta and b chains.

Its subcellular location is the cell inner membrane. The enzyme catalyses ATP + H2O + 4 H(+)(in) = ADP + phosphate + 5 H(+)(out). Functionally, produces ATP from ADP in the presence of a proton gradient across the membrane. The catalytic sites are hosted primarily by the beta subunits. This chain is ATP synthase subunit beta, found in Francisella tularensis subsp. tularensis (strain FSC 198).